The sequence spans 152 residues: Small ribosomal subunit protein bS6 (152 aa).

The interval histidine 96–valine 152 is disordered.

This sequence belongs to the bacterial ribosomal protein bS6 family.

Functionally, binds together with bS18 to 16S ribosomal RNA. This is Small ribosomal subunit protein bS6 from Xanthobacter autotrophicus (strain ATCC BAA-1158 / Py2).